Here is a 548-residue protein sequence, read N- to C-terminus: Kinetochore and Eb1-associated basic protein (548 aa).

2 disordered regions span residues 1 to 51 (MSSM…PKHP) and 82 to 181 (YRSS…IRPK). 3 stretches are compositionally biased toward basic and acidic residues: residues 20-29 (RTKELLERQR), 104-116 (RTWE…EFRS), and 127-141 (PRPR…DLRS). Residues 100-253 (QNRQRTWEGP…TTSKRKLDFK (154 aa)) are important for kinetochore and microtubule localization. Residues 144-155 (QGTPATKIPSQR) are compositionally biased toward polar residues. Residues 149 to 152 (TKIP) carry the SXIP motif 1 motif. The segment covering 156 to 165 (NPKENQELSK) has biased composition (basic and acidic residues). The segment covering 166–175 (SHTCIPSSEP) has biased composition (polar residues). An SXIP motif 2 motif is present at residues 168–171 (TCIP). Positions 237–372 (SDKGIKLTTS…MCALPVVSEK (136 aa)) are CH (calponin-homology)-like region, which is not required for kinetochore and microtubule localization. A coiled-coil region spans residues 386–457 (YDVMSLQQKF…LQLQRLRLQE (72 aa)).

As to quaternary structure, interacts with Eb1 via the two SxIP motifs; the interaction is not required for kebab kinetochore localization.

Its subcellular location is the cytoplasm. It is found in the perinuclear region. The protein resides in the chromosome. It localises to the centromere. The protein localises to the kinetochore. Its subcellular location is the cytoskeleton. It is found in the spindle. The chain is Kinetochore and Eb1-associated basic protein from Drosophila melanogaster (Fruit fly).